A 365-amino-acid chain; its full sequence is Phosphoserine aminotransferase (365 aa).

Arg40 is a binding site for L-glutamate. Residues 74-75, Phe99, Thr155, Asp177, and Gln200 contribute to the pyridoxal 5'-phosphate site; that span reads AS. Lys201 bears the N6-(pyridoxal phosphate)lysine mark. Pyridoxal 5'-phosphate is bound at residue 241–242; that stretch reads NT.

It belongs to the class-V pyridoxal-phosphate-dependent aminotransferase family. SerC subfamily. As to quaternary structure, homodimer. The cofactor is pyridoxal 5'-phosphate.

The protein resides in the cytoplasm. The enzyme catalyses O-phospho-L-serine + 2-oxoglutarate = 3-phosphooxypyruvate + L-glutamate. It catalyses the reaction 4-(phosphooxy)-L-threonine + 2-oxoglutarate = (R)-3-hydroxy-2-oxo-4-phosphooxybutanoate + L-glutamate. The protein operates within amino-acid biosynthesis; L-serine biosynthesis; L-serine from 3-phospho-D-glycerate: step 2/3. Catalyzes the reversible conversion of 3-phosphohydroxypyruvate to phosphoserine and of 3-hydroxy-2-oxo-4-phosphonooxybutanoate to phosphohydroxythreonine. In Lactococcus lactis subsp. cremoris (strain MG1363), this protein is Phosphoserine aminotransferase.